The chain runs to 442 residues: Endothelin receptor type B (442 aa).

A signal peptide spans 1-26; it reads MQSSASRCGRALVALLLACGLLGVWG. Residues 27 to 101 are Extracellular-facing; sequence EKRGFPPAQA…RKIEINKTFK (75 aa). 2 N-linked (GlcNAc...) asparagine glycosylation sites follow: Asn60 and Asn97. The chain crosses the membrane as a helical span at residues 102-126; the sequence is YINTIVSCLVFVLGIIGNSTLLRII. Over 127 to 137 the chain is Cytoplasmic; the sequence is YKNKCMRNGPN. A helical transmembrane segment spans residues 138–163; it reads ILIASLALGDLLHIIIDIPINAYKLL. Over 164–175 the chain is Extracellular; it reads AGDWPFGAEMCK. Cys174 and Cys255 are joined by a disulfide. The chain crosses the membrane as a helical span at residues 176–197; it reads LVPFIQKASVGITVLSLCALSI. Residues 198–218 are Cytoplasmic-facing; it reads DRYRAVASWSRIKGIGVPKWT. A helical transmembrane segment spans residues 219–243; sequence AVEIVLIWVVSVVLAVPEAIGFDVI. The Extracellular portion of the chain corresponds to 244–271; the sequence is TSDYKGKPLRVCMLNPFQKTAFMQFYKT. Residues 272–296 form a helical membrane-spanning segment; that stretch reads AKDWWLFSFYFCLPLAITAIFYTLM. Topologically, residues 297–324 are cytoplasmic; the sequence is TCEMLRKKSGMQIALNDHLKQRREVAKT. The residue at position 305 (Ser305) is a Phosphoserine. Residues 325-350 traverse the membrane as a helical segment; sequence VFCLVLVFALCWLPLHLSRILKLTLY. The Extracellular segment spans residues 351–362; that stretch reads DQSNPQRCELLS. Residues 363-389 traverse the membrane as a helical segment; that stretch reads FLLVLDYIGINMASLNSCINPIALYLV. Topologically, residues 390–442 are cytoplasmic; it reads SKRFKNCFKSCLCCWCQTFEEKQSLEEKQSCLKFKANDHGYDNFRSSNKYSSS. 3 S-palmitoyl cysteine lipidation sites follow: Cys402, Cys403, and Cys405. Ser419 carries the post-translational modification Phosphoserine. Tyr439 carries the post-translational modification Phosphotyrosine. Phosphoserine occurs at positions 440, 441, and 442.

It belongs to the G-protein coupled receptor 1 family. Endothelin receptor subfamily. EDNRB sub-subfamily. As to expression, widely distributed in cell types of a variety of tissues.

The protein localises to the cell membrane. Functionally, non-specific receptor for endothelin 1, 2, and 3. Mediates its action by association with G proteins that activate a phosphatidylinositol-calcium second messenger system. This chain is Endothelin receptor type B, found in Rattus norvegicus (Rat).